Reading from the N-terminus, the 480-residue chain is Cytochrome c oxidase subunit 1 (480 aa).

Residues 22–42 (ISYLWLAYWFGMIGFYMSVLI) form a helical membrane-spanning segment. Ca(2+) is bound by residues E45 and G50. Helical transmembrane passes span 64–84 (LLFTLHGLIMVFFNIMTGLFG), 109–129 (SLLLQPIGFVLVVSSVYLEIG), 151–171 (LIIFGLLAAGIASTLSSINFI), 194–214 (IVLTSFLLLLSLPVVTAVFLM), 240–260 (LFWFFGHPEVYIMILPGFGII), 278–298 (MILAMGSIALLGCLVWGHHMY), 309–329 (YFTTVTILIALPTGNKIFNWV), and 343–363 (LILFAVLFIVNFVIGGTTGVV). H69 is a Fe(II)-heme a binding site. Cu cation is bound at residue H246. Residues 246–250 (HPEVY) constitute a cross-link (1'-histidyl-3'-tyrosine (His-Tyr)). Y250 lines the O2 pocket. Residues H295 and H296 each contribute to the Cu cation site. The Mg(2+) site is built by H374 and D375. H382 is a heme a3 binding site. The next 2 membrane-spanning stretches (helical) occupy residues 382 to 402 (HFHFVLSIGAIISLICFIVYI) and 416 to 436 (LSLMAPIFMIAVLFTFLPMHF). Residue H384 coordinates Fe(II)-heme a. P447 is a Ca(2+) binding site. A helical membrane pass occupies residues 458-478 (FICTLGATMMLVLKLTVLFII).

This sequence belongs to the heme-copper respiratory oxidase family. As to quaternary structure, component of the cytochrome c oxidase (complex IV, CIV), a multisubunit enzyme composed of a catalytic core of 3 subunits and several supernumerary subunits. The complex exists as a monomer or a dimer and forms supercomplexes (SCs) in the inner mitochondrial membrane with ubiquinol-cytochrome c oxidoreductase (cytochrome b-c1 complex, complex III, CIII). The cofactor is heme. Requires Cu cation as cofactor.

The protein localises to the mitochondrion inner membrane. The catalysed reaction is 4 Fe(II)-[cytochrome c] + O2 + 8 H(+)(in) = 4 Fe(III)-[cytochrome c] + 2 H2O + 4 H(+)(out). It participates in energy metabolism; oxidative phosphorylation. Its function is as follows. Component of the cytochrome c oxidase, the last enzyme in the mitochondrial electron transport chain which drives oxidative phosphorylation. The respiratory chain contains 3 multisubunit complexes succinate dehydrogenase (complex II, CII), ubiquinol-cytochrome c oxidoreductase (cytochrome b-c1 complex, complex III, CIII) and cytochrome c oxidase (complex IV, CIV), that cooperate to transfer electrons derived from NADH and succinate to molecular oxygen, creating an electrochemical gradient over the inner membrane that drives transmembrane transport and the ATP synthase. Cytochrome c oxidase is the component of the respiratory chain that catalyzes the reduction of oxygen to water. Electrons originating from reduced cytochrome c in the intermembrane space (IMS) are transferred via the dinuclear copper A center (CU(A)) of subunit 2 and heme A of subunit 1 to the active site in subunit 1, a binuclear center (BNC) formed by heme A3 and copper B (CU(B)). The BNC reduces molecular oxygen to 2 water molecules using 4 electrons from cytochrome c in the IMS and 4 protons from the mitochondrial matrix. In Theileria annulata, this protein is Cytochrome c oxidase subunit 1 (MT-CO1).